The sequence spans 289 residues: Metal-staphylopine import system permease protein CntC (289 aa).

5 helical membrane-spanning segments follow: residues 13–33 (AVIA…APLV), 77–97 (LLYV…LGFL), 115–135 (VMLA…FGMG), 194–214 (IAII…GFSF), and 249–269 (IAIV…QIAI). The ABC transmembrane type-1 domain maps to 73 to 262 (IRPSLLYVFV…IIVMAFNFLS (190 aa)).

It belongs to the binding-protein-dependent transport system permease family. In terms of assembly, the complex is composed of two ATP-binding proteins (CntD and CntF), two transmembrane proteins (CntB and CntC) and a solute-binding protein (CntA).

It localises to the cell membrane. Part of the ABC transporter complex CntABCDF (Opp1) involved in the uptake of metal in complex with the metallophore staphylopine (StP). May be involved in the import of a large array of divalent metals ions such as nickel, cobalt, zinc, copper and iron. Probably responsible for the translocation of the substrate across the membrane. This chain is Metal-staphylopine import system permease protein CntC, found in Staphylococcus aureus (strain Mu50 / ATCC 700699).